The chain runs to 144 residues: Large ribosomal subunit protein eL27 (144 aa).

Belongs to the eukaryotic ribosomal protein eL27 family.

Its subcellular location is the cytoplasm. This chain is Large ribosomal subunit protein eL27 (RPL27), found in Tetrahymena thermophila.